An 872-amino-acid chain; its full sequence is DNA mismatch repair protein MutS (872 aa).

632–639 (GPNMGGKS) contributes to the ATP binding site.

This sequence belongs to the DNA mismatch repair MutS family.

Functionally, this protein is involved in the repair of mismatches in DNA. It is possible that it carries out the mismatch recognition step. This protein has a weak ATPase activity. The protein is DNA mismatch repair protein MutS of Colwellia psychrerythraea (strain 34H / ATCC BAA-681) (Vibrio psychroerythus).